Here is a 256-residue protein sequence, read N- to C-terminus: Ferritin-3, chloroplastic (256 aa).

The N-terminal 54 residues, 1 to 54 (MALSCSKVLTFSLSSVVGGDDAKKKLSLCSSSSLSASVNGGGSRNMRVCAAASN), are a transit peptide targeting the chloroplast. The interval 55 to 87 (APAPLTGVIFEPFQELKKDYLAVPIAPNVSLSR) is extension peptide (EP). A Ferritin-like diiron domain is found at 88–241 (QNYSDEAEAA…EYVTQLRLVG (154 aa)). Fe cation is bound by residues glutamate 105, glutamate 140, histidine 143, glutamate 189, and glutamine 223.

This sequence belongs to the ferritin family. As to quaternary structure, oligomer of 24 subunits. There are two types of subunits: L (light) chain and H (heavy) chain. The major chain can be light or heavy, depending on the species and tissue type. The functional molecule forms a roughly spherical shell with a diameter of 12 nm and contains a central cavity into which the insoluble mineral iron core is deposited.

Its subcellular location is the plastid. It is found in the chloroplast. It catalyses the reaction 4 Fe(2+) + O2 + 4 H(+) = 4 Fe(3+) + 2 H2O. Its function is as follows. Stores iron in a soluble, non-toxic, readily available form. Important for iron homeostasis. Has ferroxidase activity. Iron is taken up in the ferrous form and deposited as ferric hydroxides after oxidation. This chain is Ferritin-3, chloroplastic, found in Vigna unguiculata (Cowpea).